The following is a 550-amino-acid chain: Aspartate--tRNA ligase (550 aa).

Residue Glu-162 coordinates L-aspartate. Residues 186 to 189 (QIYK) are aspartate. Position 208 (Arg-208) interacts with L-aspartate. Residues 208 to 210 (RDE) and Gln-217 each bind ATP. His-417 contributes to the L-aspartate binding site. Glu-451 lines the ATP pocket. Position 458 (Arg-458) interacts with L-aspartate. 499-502 (GIDR) is a binding site for ATP.

This sequence belongs to the class-II aminoacyl-tRNA synthetase family. Type 1 subfamily. Homodimer.

Its subcellular location is the cytoplasm. It carries out the reaction tRNA(Asp) + L-aspartate + ATP = L-aspartyl-tRNA(Asp) + AMP + diphosphate. Its function is as follows. Catalyzes the attachment of L-aspartate to tRNA(Asp) in a two-step reaction: L-aspartate is first activated by ATP to form Asp-AMP and then transferred to the acceptor end of tRNA(Asp). The polypeptide is Aspartate--tRNA ligase (Mycoplasma genitalium (strain ATCC 33530 / DSM 19775 / NCTC 10195 / G37) (Mycoplasmoides genitalium)).